Reading from the N-terminus, the 304-residue chain is Probable 5-dehydro-4-deoxyglucarate dehydratase (304 aa).

The protein belongs to the DapA family.

The catalysed reaction is 5-dehydro-4-deoxy-D-glucarate + H(+) = 2,5-dioxopentanoate + CO2 + H2O. It participates in carbohydrate acid metabolism; D-glucarate degradation; 2,5-dioxopentanoate from D-glucarate: step 2/2. The protein is Probable 5-dehydro-4-deoxyglucarate dehydratase of Rhodococcus jostii (strain RHA1).